We begin with the raw amino-acid sequence, 217 residues long: Non-structural protein NS3 (217 aa).

It belongs to the orbivirus NS3 family.

In terms of biological role, may play a role in the release of virions from infected cells. This is Non-structural protein NS3 (Segment-10) from Camelus dromedarius (Dromedary).